We begin with the raw amino-acid sequence, 346 residues long: Putative isoaspartyl peptidase/L-asparaginase (346 aa).

The active-site Nucleophile is the threonine 207. Substrate contacts are provided by residues 235 to 238 (RVGD) and 257 to 260 (TGTG).

Belongs to the Ntn-hydrolases family. As to quaternary structure, heterodimer of an alpha and beta chain produced by autocleavage. Post-translationally, cleaved into an alpha and beta chain by autocatalysis; this activates the enzyme. The N-terminal residue of the beta subunit is responsible for the nucleophile hydrolase activity.

The enzyme catalyses Cleavage of a beta-linked Asp residue from the N-terminus of a polypeptide.. It carries out the reaction L-asparagine + H2O = L-aspartate + NH4(+). Functionally, has both L-asparaginase and beta-aspartyl peptidase activity. Does not have aspartylglucosaminidase activity and is inactive toward GlcNAc-L-Asn. Likewise, has no activity toward glutamine. This chain is Putative isoaspartyl peptidase/L-asparaginase, found in Dictyostelium discoideum (Social amoeba).